Reading from the N-terminus, the 425-residue chain is Serine--tRNA ligase (425 aa).

230–232 (TAE) is a binding site for L-serine. 261–263 (RSE) contributes to the ATP binding site. Position 284 (Glu284) interacts with L-serine. 348–351 (EISS) is a binding site for ATP. Ser383 serves as a coordination point for L-serine.

The protein belongs to the class-II aminoacyl-tRNA synthetase family. Type-1 seryl-tRNA synthetase subfamily. Homodimer. The tRNA molecule binds across the dimer.

It is found in the cytoplasm. The catalysed reaction is tRNA(Ser) + L-serine + ATP = L-seryl-tRNA(Ser) + AMP + diphosphate + H(+). The enzyme catalyses tRNA(Sec) + L-serine + ATP = L-seryl-tRNA(Sec) + AMP + diphosphate + H(+). Its pathway is aminoacyl-tRNA biosynthesis; selenocysteinyl-tRNA(Sec) biosynthesis; L-seryl-tRNA(Sec) from L-serine and tRNA(Sec): step 1/1. Its function is as follows. Catalyzes the attachment of serine to tRNA(Ser). Is also able to aminoacylate tRNA(Sec) with serine, to form the misacylated tRNA L-seryl-tRNA(Sec), which will be further converted into selenocysteinyl-tRNA(Sec). The sequence is that of Serine--tRNA ligase from Ligilactobacillus salivarius (strain UCC118) (Lactobacillus salivarius).